A 726-amino-acid chain; its full sequence is Dipeptidyl-peptidase 5 (726 aa).

The signal sequence occupies residues 1–19; sequence MAAAKWLIASLAFASSGLA. N-linked (GlcNAc...) asparagine glycosylation is found at N96 and N252. Residues 269–291 form a disordered region; sequence AEPINKRNGPRTPQGIEGASSSP. The active-site Charge relay system is the S558. N605 and N638 each carry an N-linked (GlcNAc...) asparagine glycan. Active-site charge relay system residues include D641 and H673. Residue N699 is glycosylated (N-linked (GlcNAc...) asparagine).

The protein belongs to the peptidase S9C family.

The protein localises to the secreted. In Trichophyton schoenleinii, this protein is Dipeptidyl-peptidase 5 (DPPV).